Consider the following 443-residue polypeptide: Ribosomal protein uS12 methylthiotransferase RimO (443 aa).

The 111-residue stretch at 9-119 folds into the MTTase N-terminal domain; that stretch reads PKIGMVSLGC…VVSAVHDAAP (111 aa). [4Fe-4S] cluster is bound by residues Cys-18, Cys-54, Cys-83, Cys-150, Cys-154, and Cys-157. The Radical SAM core domain maps to 136–373; sequence LTPRHYSYLK…MEKAAQISEA (238 aa). The 68-residue stretch at 376 to 443 folds into the TRAM domain; sequence QAKIGRDIAT…EHDLFGVALS (68 aa).

It belongs to the methylthiotransferase family. RimO subfamily. The cofactor is [4Fe-4S] cluster.

The protein localises to the cytoplasm. It carries out the reaction L-aspartate(89)-[ribosomal protein uS12]-hydrogen + (sulfur carrier)-SH + AH2 + 2 S-adenosyl-L-methionine = 3-methylsulfanyl-L-aspartate(89)-[ribosomal protein uS12]-hydrogen + (sulfur carrier)-H + 5'-deoxyadenosine + L-methionine + A + S-adenosyl-L-homocysteine + 2 H(+). In terms of biological role, catalyzes the methylthiolation of an aspartic acid residue of ribosomal protein uS12. The chain is Ribosomal protein uS12 methylthiotransferase RimO from Zymomonas mobilis subsp. mobilis (strain ATCC 31821 / ZM4 / CP4).